Here is a 474-residue protein sequence, read N- to C-terminus: Aspartyl/glutamyl-tRNA(Asn/Gln) amidotransferase subunit B (474 aa).

The protein belongs to the GatB/GatE family. GatB subfamily. In terms of assembly, heterotrimer of A, B and C subunits.

The catalysed reaction is L-glutamyl-tRNA(Gln) + L-glutamine + ATP + H2O = L-glutaminyl-tRNA(Gln) + L-glutamate + ADP + phosphate + H(+). The enzyme catalyses L-aspartyl-tRNA(Asn) + L-glutamine + ATP + H2O = L-asparaginyl-tRNA(Asn) + L-glutamate + ADP + phosphate + 2 H(+). Its function is as follows. Allows the formation of correctly charged Asn-tRNA(Asn) or Gln-tRNA(Gln) through the transamidation of misacylated Asp-tRNA(Asn) or Glu-tRNA(Gln) in organisms which lack either or both of asparaginyl-tRNA or glutaminyl-tRNA synthetases. The reaction takes place in the presence of glutamine and ATP through an activated phospho-Asp-tRNA(Asn) or phospho-Glu-tRNA(Gln). This Persephonella marina (strain DSM 14350 / EX-H1) protein is Aspartyl/glutamyl-tRNA(Asn/Gln) amidotransferase subunit B.